A 908-amino-acid chain; its full sequence is DNA (cytosine-5)-methyltransferase 3A (908 aa).

Residues 1–13 (MPSSGPGDTSISS) show a composition bias toward polar residues. Disordered stretches follow at residues 1-183 (MPSS…PMPR) and 226-281 (SQAS…PEYE). The segment covering 14–37 (LEREDDRKEGEEQEENRGKEERQE) has biased composition (basic and acidic residues). Residues 44-54 (KVGRPGRKRKH) show a composition bias toward basic residues. A compositionally biased stretch (polar residues) spans 69–80 (TTKSQPTAQDSG). S102 carries the phosphoserine modification. Positions 110 to 124 (GAPAEGEGTETPPEA) are enriched in low complexity. Position 120 is a phosphothreonine (T120). A Glycyl lysine isopeptide (Lys-Gly) (interchain with G-Cter in SUMO2) cross-link involves residue K158. R167 bears the Omega-N-methylarginine mark. Residues 195-399 (SKRKRDEWLA…DTGKAVEVQN (205 aa)) form an interaction with DNMT1 and DNMT3B region. 2 positions are modified to phosphoserine: S239 and S251. A compositionally biased stretch (polar residues) spans 242–256 (AVQQPTDPASPTVAT). Residue T257 is modified to Phosphothreonine. A PWWP domain is found at 257–315 (TPEPVGADAGDKNATKAADDEPEYEDGRGFGIGELVWGKLRGFSWWPGRIVSWWMTGRS). Over residues 265–275 (AGDKNATKAAD) the composition is skewed to basic and acidic residues. Residues S386 and S389 each carry the phosphoserine modification. A disordered region spans residues 443 to 462 (AYAPPPPAKKPRKSTTEKPK). An ADD domain is found at 478–610 (EVRQKCRNIE…LQMFFANNHD (133 aa)). A GATA-type; atypical zinc finger spans residues 489–519 (ICISCGSLNVTLEHPLFIGGMCQNCKNCFLE). The interaction with the PRC2/EED-EZH2 complex stretch occupies residues 490–582 (CISCGSLNVT…KEDPWNCYMC (93 aa)). Residues 530–586 (QSYCTICCGGREVLMCGNNNCCRCFCVECVDLLVGPGAAQAAIKEDPWNCYMCGHKG) form a PHD-type; atypical zinc finger. The SAM-dependent MTase C5-type domain occupies 630–908 (IRVLSLFDGI…APLKEYFACV (279 aa)). S-adenosyl-L-methionine is bound by residues 637–641 (DGIAT), E660, and 682–684 (DVR). Residue C706 is part of the active site. At C706 the chain carries S-methylcysteine; by autocatalysis. 887–889 (RSW) contributes to the S-adenosyl-L-methionine binding site.

This sequence belongs to the class I-like SAM-binding methyltransferase superfamily. C5-methyltransferase family. As to quaternary structure, heterotetramer composed of 1 DNMT3A homodimer and 2 DNMT3L subunits (DNMT3L-DNMT3A-DNMT3A-DNMT3L). Interacts with DNMT1 and DNMT3B. Interacts with MPHOSPH8. Interacts with histone H3 that is not methylated at 'Lys-4' (H3K4). Binds the ZBTB18 transcriptional repressor. Interacts with SETDB1. Associates with HDAC1 through its ADD domain. Interacts with UHRF1. Interacts with the PRC2/EED-EZH2 complex. Interacts with UBC9, PIAS1 and PIAS2. Interacts with SPOCD1. Interacts with ZNF263; recruited to the SIX3 promoter along with other proteins involved in chromatin modification and transcriptional corepression where it contributes to transcriptional repression. In terms of processing, sumoylated; sumoylation disrupts the ability to interact with histone deacetylases (HDAC1 and HDAC2) and repress transcription. Auto-methylated at Cys-706: auto-methylation takes place in absence of DNA substrate and inactivates the DNA methyltransferase activity. Inactivation by auto-methylation may be used to inactivate unused DNA methyltransferases in the cell.

It is found in the nucleus. It localises to the chromosome. The protein localises to the cytoplasm. It catalyses the reaction a 2'-deoxycytidine in DNA + S-adenosyl-L-methionine = a 5-methyl-2'-deoxycytidine in DNA + S-adenosyl-L-homocysteine + H(+). The enzyme catalyses L-cysteinyl-[protein] + S-adenosyl-L-methionine = S-methyl-L-cysteinyl-[protein] + S-adenosyl-L-homocysteine + H(+). With respect to regulation, activated by binding to the regulatory factor DNMT3L. Auto-methylation at Cys-706 in absence of DNA inactivates the DNA methyltransferase activity. Required for genome-wide de novo methylation and is essential for the establishment of DNA methylation patterns during development. DNA methylation is coordinated with methylation of histones. It modifies DNA in a non-processive manner and also methylates non-CpG sites. May preferentially methylate DNA linker between 2 nucleosomal cores and is inhibited by histone H1. Plays a role in paternal and maternal imprinting. Required for methylation of most imprinted loci in germ cells. Acts as a transcriptional corepressor for ZBTB18. Recruited to trimethylated 'Lys-36' of histone H3 (H3K36me3) sites. Can actively repress transcription through the recruitment of HDAC activity. Also has weak auto-methylation activity on Cys-706 in absence of DNA. The protein is DNA (cytosine-5)-methyltransferase 3A (Dnmt3a) of Rattus norvegicus (Rat).